A 241-amino-acid chain; its full sequence is Chaperone protein HifB (241 aa).

The signal sequence occupies residues 1–27; sequence MGKTMFKKTLLFFTALFFAALCAFSAN.

It belongs to the periplasmic pilus chaperone family.

Its subcellular location is the periplasm. Functionally, mediates assembly of pili by forming soluble multimeric complexes with pili subunits as an intermediate step in the assembly process. This protein is involved in type B pili (HifA) assembly. The chain is Chaperone protein HifB (hifB) from Haemophilus influenzae.